The primary structure comprises 481 residues: Phosphoglucosamine mutase (481 aa).

The active-site Phosphoserine intermediate is Ser129. Mg(2+) contacts are provided by Ser129, Asp271, Asp273, and Asp275. Ser129 carries the post-translational modification Phosphoserine.

The protein belongs to the phosphohexose mutase family. Mg(2+) is required as a cofactor. Post-translationally, activated by phosphorylation.

The enzyme catalyses alpha-D-glucosamine 1-phosphate = D-glucosamine 6-phosphate. Catalyzes the conversion of glucosamine-6-phosphate to glucosamine-1-phosphate. The sequence is that of Phosphoglucosamine mutase from Picosynechococcus sp. (strain ATCC 27264 / PCC 7002 / PR-6) (Agmenellum quadruplicatum).